A 314-amino-acid polypeptide reads, in one-letter code: Olfactory receptor 5G9 (314 aa).

Residues 1–25 are Extracellular-facing; the sequence is MADENYTRITEFIFIGLRYHPNLQV. An N-linked (GlcNAc...) asparagine glycan is attached at N5. The helical transmembrane segment at 26–46 threads the bilayer; that stretch reads FLFLLFLLFYLVTMTGNLGMI. Residues 47 to 54 are Cytoplasmic-facing; that stretch reads ILIRVDSR. A helical membrane pass occupies residues 55–75; sequence LHTPMYFFLSHLSFVDICFSS. Topologically, residues 76–99 are extracellular; that stretch reads VVAPKMLTDFFADKKAISFLGCVL. C97 and C189 are joined by a disulfide. The helical transmembrane segment at 100–120 threads the bilayer; it reads QQWFFGFFVAIECLLLASMAY. Residues 121-133 are Cytoplasmic-facing; it reads DRYVAICNPLLYS. Residues 134-154 form a helical membrane-spanning segment; sequence VAMSQRLCIQLVIGPYAVGFF. The Extracellular segment spans residues 155–196; the sequence is NTMTHTTAAFRLPFCGSNIINHFFCDMSPILSLICADIRINK. A helical transmembrane segment spans residues 197–217; sequence LLVFIVAGAVLIVSSTTIIVS. At 218-237 the chain is on the cytoplasmic side; it reads YFHILIAILRIRSAEGRRKA. Residues 238 to 258 form a helical membrane-spanning segment; that stretch reads FSTCSSHVTAVSILYGTLFFI. Residues 259-271 are Extracellular-facing; that stretch reads YVRPSAISSLDLN. A helical transmembrane segment spans residues 272 to 292; it reads KVVSVFYTAVIPMLNPLIYSL. Over 293–314 the chain is Cytoplasmic; sequence RNKEVKSAMGRTVAKAKVFLKN.

The protein belongs to the G-protein coupled receptor 1 family.

The protein resides in the cell membrane. Its function is as follows. Potential odorant receptor. In Mus musculus (Mouse), this protein is Olfactory receptor 5G9.